A 510-amino-acid chain; its full sequence is tRNA-2-methylthio-N(6)-dimethylallyladenosine synthase (510 aa).

Positions 1–25 are disordered; sequence MSGFNDSPVPESAEKADGLLSQERG. In terms of domain architecture, MTTase N-terminal spans 34–154; that stretch reads RKLFVKSYGC…LPDLLRRVAH (121 aa). Residues cysteine 43, cysteine 79, cysteine 117, cysteine 195, cysteine 199, and cysteine 202 each coordinate [4Fe-4S] cluster. The 234-residue stretch at 181–414 folds into the Radical SAM core domain; it reads AERGVGAFVT…QALLEEQRQA (234 aa). A TRAM domain is found at 417–479; the sequence is KAMIGRVLPV…PNSFHGRLLA (63 aa). Residues 484–493 show a composition bias toward polar residues; it reads QESAQGQESA. Positions 484–510 are disordered; that stretch reads QESAQGQESAQGMERMEQNARAWEVPV.

Belongs to the methylthiotransferase family. MiaB subfamily. In terms of assembly, monomer. The cofactor is [4Fe-4S] cluster.

Its subcellular location is the cytoplasm. The catalysed reaction is N(6)-dimethylallyladenosine(37) in tRNA + (sulfur carrier)-SH + AH2 + 2 S-adenosyl-L-methionine = 2-methylsulfanyl-N(6)-dimethylallyladenosine(37) in tRNA + (sulfur carrier)-H + 5'-deoxyadenosine + L-methionine + A + S-adenosyl-L-homocysteine + 2 H(+). Functionally, catalyzes the methylthiolation of N6-(dimethylallyl)adenosine (i(6)A), leading to the formation of 2-methylthio-N6-(dimethylallyl)adenosine (ms(2)i(6)A) at position 37 in tRNAs that read codons beginning with uridine. The protein is tRNA-2-methylthio-N(6)-dimethylallyladenosine synthase of Beijerinckia indica subsp. indica (strain ATCC 9039 / DSM 1715 / NCIMB 8712).